The following is a 373-amino-acid chain: SWI/SNF-related matrix-associated actin-dependent regulator of chromatin subfamily B member 1 (373 aa).

The DNA-binding stretch occupies residues 1 to 101 (MALSKAFGQK…DEKYKAVSIS (101 aa)).

This sequence belongs to the SNF5 family. Component of the multiprotein chromatin-remodeling complexes SWI/SNF. Component of neural progenitors-specific chromatin remodeling complex (npBAF complex) and the neuron-specific chromatin remodeling complex (nBAF complex). Component of the BAF (SWI/SNF) chromatin remodeling complex. Component of the SWI/SNF-B (PBAF) chromatin remodeling complex. Binds to double-stranded DNA.

It localises to the nucleus. Involved in chromatin-remodeling. Core component of the BAF (SWI/SNF) complex. This ATP-dependent chromatin-remodeling complex plays important roles in cell proliferation and differentiation, in cellular antiviral activities and inhibition of tumor formation. Belongs to the neural progenitors-specific chromatin remodeling complex (npBAF complex) and the neuron-specific chromatin remodeling complex (nBAF complex) and may play a role in neural development. This chain is SWI/SNF-related matrix-associated actin-dependent regulator of chromatin subfamily B member 1 (smarcb1), found in Dichotomyctere fluviatilis (Green pufferfish).